A 505-amino-acid chain; its full sequence is Oxidative stress-induced growth inhibitor 2 (505 aa).

The protein belongs to the OKL38 family. NADPH is required as a cofactor. Ubiquitous. Expressed at higher levels in testis and ovary.

It localises to the midbody. In terms of biological role, monooxygenase catalytic activity. May be involved in meiosis or the maturation of germ cells. The chain is Oxidative stress-induced growth inhibitor 2 from Homo sapiens (Human).